A 203-amino-acid chain; its full sequence is Outer-membrane lipoprotein carrier protein (203 aa).

Residues 1-19 (MKKSIVVLFSAVLPFAVFA) form the signal peptide.

It belongs to the LolA family. Monomer.

Its subcellular location is the periplasm. Participates in the translocation of lipoproteins from the inner membrane to the outer membrane. Only forms a complex with a lipoprotein if the residue after the N-terminal Cys is not an aspartate (The Asp acts as a targeting signal to indicate that the lipoprotein should stay in the inner membrane). This chain is Outer-membrane lipoprotein carrier protein, found in Shewanella amazonensis (strain ATCC BAA-1098 / SB2B).